Reading from the N-terminus, the 207-residue chain is dTTP/UTP pyrophosphatase (207 aa).

Asp79 (proton acceptor) is an active-site residue.

Belongs to the Maf family. YhdE subfamily. It depends on a divalent metal cation as a cofactor.

The protein localises to the cytoplasm. The enzyme catalyses dTTP + H2O = dTMP + diphosphate + H(+). It catalyses the reaction UTP + H2O = UMP + diphosphate + H(+). In terms of biological role, nucleoside triphosphate pyrophosphatase that hydrolyzes dTTP and UTP. May have a dual role in cell division arrest and in preventing the incorporation of modified nucleotides into cellular nucleic acids. This is dTTP/UTP pyrophosphatase from Rhodopseudomonas palustris (strain BisB5).